The following is a 181-amino-acid chain: Adenylate kinase (181 aa).

10 to 15 (GAGKGT) contacts ATP. Positions 30–59 (STGELFRRNIEEGTKLGVEAKRYLDAGDLV) are NMP. Residues Thr-31, Arg-36, 57–59 (DLV), 85–88 (GYPR), and Gln-92 each bind AMP. The LID stretch occupies residues 126–132 (GRGRADD). Arg-127 contributes to the ATP binding site. The AMP site is built by Arg-129 and Arg-140. Residue Gly-166 participates in ATP binding.

Belongs to the adenylate kinase family. Monomer.

The protein localises to the cytoplasm. The enzyme catalyses AMP + ATP = 2 ADP. It participates in purine metabolism; AMP biosynthesis via salvage pathway; AMP from ADP: step 1/1. Its function is as follows. Catalyzes the reversible transfer of the terminal phosphate group between ATP and AMP. Plays an important role in cellular energy homeostasis and in adenine nucleotide metabolism. This Mycobacterium tuberculosis (strain ATCC 25177 / H37Ra) protein is Adenylate kinase.